Reading from the N-terminus, the 271-residue chain is Purine nucleoside phosphorylase 1 (271 aa).

Residues S28, H59, 79–81 (RFH), and A111 contribute to the phosphate site. Phosphoserine is present on S28. E191 contacts a purine D-ribonucleoside. S210 is a binding site for phosphate. Residue N233 participates in a purine D-ribonucleoside binding.

The protein belongs to the PNP/MTAP phosphorylase family. In terms of assembly, homotrimer.

The enzyme catalyses a purine 2'-deoxy-D-ribonucleoside + phosphate = a purine nucleobase + 2-deoxy-alpha-D-ribose 1-phosphate. It participates in purine metabolism; purine nucleoside salvage. In terms of biological role, the purine nucleoside phosphorylases catalyze the phosphorolytic breakdown of the N-glycosidic bond in the beta-(deoxy)ribonucleoside molecules, with the formation of the corresponding free purine bases and pentose-1-phosphate. Cleaves guanosine, inosine, 2'-deoxyguanosine and 2'-deoxyinosine. The sequence is that of Purine nucleoside phosphorylase 1 (punA) from Bacillus subtilis (strain 168).